Here is a 329-residue protein sequence, read N- to C-terminus: GTP 3',8-cyclase (329 aa).

The 222-residue stretch at 8–229 (AFARTFYYLR…AGWQRRLPGR (222 aa)) folds into the Radical SAM core domain. Arg-17 serves as a coordination point for GTP. Residues Cys-24 and Cys-28 each coordinate [4Fe-4S] cluster. Tyr-30 is an S-adenosyl-L-methionine binding site. Residue Cys-31 coordinates [4Fe-4S] cluster. Arg-68 lines the GTP pocket. Gly-72 is a binding site for S-adenosyl-L-methionine. Position 99 (Thr-99) interacts with GTP. An S-adenosyl-L-methionine-binding site is contributed by Ser-123. Lys-160 is a binding site for GTP. Met-194 contributes to the S-adenosyl-L-methionine binding site. [4Fe-4S] cluster is bound by residues Cys-257 and Cys-260. Position 262 to 264 (262 to 264 (RLR)) interacts with GTP. [4Fe-4S] cluster is bound at residue Cys-274.

It belongs to the radical SAM superfamily. MoaA family. In terms of assembly, monomer and homodimer. Requires [4Fe-4S] cluster as cofactor.

The enzyme catalyses GTP + AH2 + S-adenosyl-L-methionine = (8S)-3',8-cyclo-7,8-dihydroguanosine 5'-triphosphate + 5'-deoxyadenosine + L-methionine + A + H(+). It functions in the pathway cofactor biosynthesis; molybdopterin biosynthesis. Functionally, catalyzes the cyclization of GTP to (8S)-3',8-cyclo-7,8-dihydroguanosine 5'-triphosphate. This is GTP 3',8-cyclase from Edwardsiella ictaluri (strain 93-146).